A 902-amino-acid polypeptide reads, in one-letter code: Transcription factor E2F7 (902 aa).

Residue Ser-96 is modified to Phosphoserine. Residues 143–212 (RKQKSLGLLC…VAKNQYGWHG (70 aa)) mediate DNA binding. Positions 253–269 (ERRKDGSPDPRDQHLLD) are enriched in basic and acidic residues. Positions 253–283 (ERRKDGSPDPRDQHLLDFSESDYPSSSANSR) are disordered. A DNA-binding region spans residues 283–368 (RKDKSLRIMS…GRKPAFKWIG (86 aa)). Ser-411 carries the post-translational modification Phosphoserine. 3 disordered regions span residues 418–439 (SEKIQRKVNSEPSSPQGGKQGP), 589–627 (LCEERNPLEDDEPAVKRQSREFEDSPLSLVMPKKPSNST), and 665–690 (NGFIASECGNPSRNPDTEKSSNDNEI). Basic and acidic residues-rich tracts occupy residues 589 to 611 (LCEERNPLEDDEPAVKRQSREFE) and 679 to 690 (PDTEKSSNDNEI). Ser-832 carries the post-translational modification Phosphoserine. The segment at 844 to 902 (KAEQSPAPATPKSIQRRHRETFFKTPGSLGDPAFRRERNQSRNTSSAQRRLEISSSGPD) is disordered. Residues 884–902 (SRNTSSAQRRLEISSSGPD) show a composition bias toward polar residues.

Belongs to the E2F/DP family. As to quaternary structure, homodimer and heterodimer: mainly forms homodimers and, to a lesser extent, heterodimers with E2F8. Dimerization is important for DNA-binding. Interacts with HIF1A. Interacts with MN1.

The protein resides in the nucleus. In terms of biological role, atypical E2F transcription factor that participates in various processes such as angiogenesis, polyploidization of specialized cells and DNA damage response. Mainly acts as a transcription repressor that binds DNA independently of DP proteins and specifically recognizes the E2 recognition site 5'-TTTC[CG]CGC-3'. Directly represses transcription of classical E2F transcription factors such as E2F1. Acts as a regulator of S-phase by recognizing and binding the E2-related site 5'-TTCCCGCC-3' and mediating repression of G1/S-regulated genes. Plays a key role in polyploidization of cells in placenta and liver by regulating the endocycle, probably by repressing genes promoting cytokinesis and antagonizing action of classical E2F proteins (E2F1, E2F2 and/or E2F3). Required for placental development by promoting polyploidization of trophoblast giant cells. Also involved in DNA damage response: up-regulated by p53/TP53 following genotoxic stress and acts as a downstream effector of p53/TP53-dependent repression by mediating repression of indirect p53/TP53 target genes involved in DNA replication. Acts as a promoter of sprouting angiogenesis, possibly by acting as a transcription activator: associates with HIF1A, recognizes and binds the VEGFA promoter, which is different from canonical E2 recognition site, and activates expression of the VEGFA gene. Acts as a negative regulator of keratinocyte differentiation. This Rattus norvegicus (Rat) protein is Transcription factor E2F7 (E2f7).